A 90-amino-acid chain; its full sequence is uncharacterized protein (90 aa).

It belongs to the barstar family.

This is an uncharacterized protein from Escherichia coli O157:H7.